We begin with the raw amino-acid sequence, 807 residues long: Phenylalanine--tRNA ligase beta subunit (807 aa).

A tRNA-binding domain is found at 39–156 (AGEFSGVVIG…SDAPLGQCVR (118 aa)). The 80-residue stretch at 409 to 488 (PQTKDVNLRR…RIFGYNNIPN (80 aa)) folds into the B5 domain. Positions 466, 472, 475, and 476 each coordinate Mg(2+). The 94-residue stretch at 713-806 (SRFPANRRDL…LKTELNASLR (94 aa)) folds into the FDX-ACB domain.

It belongs to the phenylalanyl-tRNA synthetase beta subunit family. Type 1 subfamily. As to quaternary structure, tetramer of two alpha and two beta subunits. It depends on Mg(2+) as a cofactor.

Its subcellular location is the cytoplasm. It carries out the reaction tRNA(Phe) + L-phenylalanine + ATP = L-phenylalanyl-tRNA(Phe) + AMP + diphosphate + H(+). This chain is Phenylalanine--tRNA ligase beta subunit, found in Colwellia psychrerythraea (strain 34H / ATCC BAA-681) (Vibrio psychroerythus).